The following is a 382-amino-acid chain: Lipoyl synthase, mitochondrial (382 aa).

The transit peptide at 1–30 (MHGRRHLAASLARALTYAPSRSISSTPSLL) directs the protein to the mitochondrion. Polar residues predominate over residues 25–34 (STPSLLQTLD). A disordered region spans residues 25-46 (STPSLLQTLDPSTPSPAAAPPT). Residues Cys-112, Cys-117, Cys-123, Cys-143, Cys-147, Cys-150, and Ser-359 each contribute to the [4Fe-4S] cluster site. Positions 128–348 (ETGTATATIM…RSLGVDMGFR (221 aa)) constitute a Radical SAM core domain.

This sequence belongs to the radical SAM superfamily. Lipoyl synthase family. [4Fe-4S] cluster serves as cofactor.

It localises to the mitochondrion. It catalyses the reaction [[Fe-S] cluster scaffold protein carrying a second [4Fe-4S](2+) cluster] + N(6)-octanoyl-L-lysyl-[protein] + 2 oxidized [2Fe-2S]-[ferredoxin] + 2 S-adenosyl-L-methionine + 4 H(+) = [[Fe-S] cluster scaffold protein] + N(6)-[(R)-dihydrolipoyl]-L-lysyl-[protein] + 4 Fe(3+) + 2 hydrogen sulfide + 2 5'-deoxyadenosine + 2 L-methionine + 2 reduced [2Fe-2S]-[ferredoxin]. It functions in the pathway protein modification; protein lipoylation via endogenous pathway; protein N(6)-(lipoyl)lysine from octanoyl-[acyl-carrier-protein]: step 2/2. Functionally, catalyzes the radical-mediated insertion of two sulfur atoms into the C-6 and C-8 positions of the octanoyl moiety bound to the lipoyl domains of lipoate-dependent enzymes, thereby converting the octanoylated domains into lipoylated derivatives. The sequence is that of Lipoyl synthase, mitochondrial from Oryza sativa subsp. japonica (Rice).